The primary structure comprises 203 residues: Abscisic acid receptor PYL5 (203 aa).

The segment covering 1-18 (MRSPVQLQHGSDATNGFH) has biased composition (polar residues). The segment at 1-29 (MRSPVQLQHGSDATNGFHTLQPHDQTDGP) is disordered. Residues 51–201 (HDVGPDQCCS…NLQSLARSTN (151 aa)) form an START-like region. Residues K87, 117 to 122 (AVSSTE), 144 to 150 (RLKNYRS), and E166 contribute to the abscisate site. The short motif at 113-117 (SGLPA) is the Gate loop element. Positions 143-145 (HRL) match the Latch loop motif.

This sequence belongs to the PYR/PYL/RCAR abscisic acid intracellular receptor family. As to quaternary structure, monomer. Homodimer. Binds ABA on one subunit only. Binds to CARs protein in an ABA-independent manner, both at the plasma membrane and in the nucleus. Binds both (-)-ABA and (+)-ABA. Interacts with HAB1, ABI1 and ABI2, and possibly with other PP2Cs.

The protein localises to the cytoplasm. Its subcellular location is the nucleus. It is found in the cell membrane. Its function is as follows. Receptor for abscisic acid (ABA) required for ABA-mediated responses such as stomatal closure and germination inhibition. Inhibits the activity of group-A protein phosphatases type 2C (PP2Cs) in an ABA-independent manner but more efficiently when activated by ABA. Confers enhanced sensitivity to ABA. Can be activated by both (-)-ABA and (+)-ABA. The polypeptide is Abscisic acid receptor PYL5 (PYL5) (Arabidopsis thaliana (Mouse-ear cress)).